The chain runs to 59 residues: MAKSKNHTAHNQTRKAHRNGIKKPKTYKYPSLKGVDPKFRRNHKHALHGTAKALAAAKK.

A compositionally biased stretch (basic residues) spans Met1 to Thr26. Positions Met1 to Pro37 are disordered. Residue Lys52 forms a Glycyl lysine isopeptide (Lys-Gly) (interchain with G-Cter in ubiquitin) linkage.

The protein belongs to the eukaryotic ribosomal protein eL29 family. As to quaternary structure, component of the large ribosomal subunit (LSU). Mature yeast ribosomes consist of a small (40S) and a large (60S) subunit. The 40S small subunit contains 1 molecule of ribosomal RNA (18S rRNA) and 33 different proteins (encoded by 57 genes). The large 60S subunit contains 3 rRNA molecules (25S, 5.8S and 5S rRNA) and 46 different proteins (encoded by 81 genes).

The protein resides in the cytoplasm. Functionally, component of the ribosome, a large ribonucleoprotein complex responsible for the synthesis of proteins in the cell. The small ribosomal subunit (SSU) binds messenger RNAs (mRNAs) and translates the encoded message by selecting cognate aminoacyl-transfer RNA (tRNA) molecules. The large subunit (LSU) contains the ribosomal catalytic site termed the peptidyl transferase center (PTC), which catalyzes the formation of peptide bonds, thereby polymerizing the amino acids delivered by tRNAs into a polypeptide chain. The nascent polypeptides leave the ribosome through a tunnel in the LSU and interact with protein factors that function in enzymatic processing, targeting, and the membrane insertion of nascent chains at the exit of the ribosomal tunnel. The chain is Large ribosomal subunit protein eL29 from Saccharomyces cerevisiae (strain ATCC 204508 / S288c) (Baker's yeast).